Here is a 342-residue protein sequence, read N- to C-terminus: S-adenosylmethionine:tRNA ribosyltransferase-isomerase (342 aa).

This sequence belongs to the QueA family. Monomer.

It is found in the cytoplasm. The catalysed reaction is 7-aminomethyl-7-carbaguanosine(34) in tRNA + S-adenosyl-L-methionine = epoxyqueuosine(34) in tRNA + adenine + L-methionine + 2 H(+). It participates in tRNA modification; tRNA-queuosine biosynthesis. Transfers and isomerizes the ribose moiety from AdoMet to the 7-aminomethyl group of 7-deazaguanine (preQ1-tRNA) to give epoxyqueuosine (oQ-tRNA). In Streptococcus pyogenes serotype M6 (strain ATCC BAA-946 / MGAS10394), this protein is S-adenosylmethionine:tRNA ribosyltransferase-isomerase.